Here is a 752-residue protein sequence, read N- to C-terminus: Catalase-peroxidase (752 aa).

A disordered region spans residues 1–21 (MSNESKCPFHQTAGGGTTNRD). A cross-link (tryptophyl-tyrosyl-methioninium (Trp-Tyr) (with M-271)) is located at residues 91–245 (WHSAGTYRIG…LAAVQMGLIY (155 aa)). The active-site Proton acceptor is H92. The interval 204 to 228 (QAPGQGDLVAEPAKHGEEQNRDLSA) is disordered. Basic and acidic residues predominate over residues 215–228 (PAKHGEEQNRDLSA). The segment at residues 245–271 (YVNPEGPEGNPDPVASGKDIRETFGRM) is a cross-link (tryptophyl-tyrosyl-methioninium (Tyr-Met) (with W-91)). Residue H286 participates in heme binding. The interval 366-391 (AHQWQPKEGKGAGTVPDAHDPSKRHA) is disordered.

The protein belongs to the peroxidase family. Peroxidase/catalase subfamily. Homodimer or homotetramer. The cofactor is heme b. Formation of the three residue Trp-Tyr-Met cross-link is important for the catalase, but not the peroxidase activity of the enzyme.

The catalysed reaction is H2O2 + AH2 = A + 2 H2O. The enzyme catalyses 2 H2O2 = O2 + 2 H2O. Functionally, bifunctional enzyme with both catalase and broad-spectrum peroxidase activity. The chain is Catalase-peroxidase from Pseudomonas putida (strain W619).